The chain runs to 481 residues: Probable cytosol aminopeptidase (481 aa).

Mn(2+)-binding residues include Lys247 and Asp252. Lys259 is a catalytic residue. Mn(2+)-binding residues include Asp270, Asp329, and Glu331. The active site involves Arg333.

This sequence belongs to the peptidase M17 family. The cofactor is Mn(2+).

The protein localises to the cytoplasm. It catalyses the reaction Release of an N-terminal amino acid, Xaa-|-Yaa-, in which Xaa is preferably Leu, but may be other amino acids including Pro although not Arg or Lys, and Yaa may be Pro. Amino acid amides and methyl esters are also readily hydrolyzed, but rates on arylamides are exceedingly low.. It carries out the reaction Release of an N-terminal amino acid, preferentially leucine, but not glutamic or aspartic acids.. In terms of biological role, presumably involved in the processing and regular turnover of intracellular proteins. Catalyzes the removal of unsubstituted N-terminal amino acids from various peptides. This is Probable cytosol aminopeptidase from Clostridium tetani (strain Massachusetts / E88).